Consider the following 399-residue polypeptide: Enoyl-[acyl-carrier-protein] reductase [NADH] (399 aa).

NAD(+) contacts are provided by residues 48-53 (GASTGY), 74-75 (FE), 111-112 (DA), and 139-140 (LA). Tyr225 is a binding site for substrate. The active-site Proton donor is the Tyr235. Residues Lys244 and 274-276 (VVT) each bind NAD(+).

Belongs to the TER reductase family. In terms of assembly, monomer.

It carries out the reaction a 2,3-saturated acyl-[ACP] + NAD(+) = a (2E)-enoyl-[ACP] + NADH + H(+). It participates in lipid metabolism; fatty acid biosynthesis. Functionally, involved in the final reduction of the elongation cycle of fatty acid synthesis (FAS II). Catalyzes the reduction of a carbon-carbon double bond in an enoyl moiety that is covalently linked to an acyl carrier protein (ACP). This Yersinia enterocolitica serotype O:8 / biotype 1B (strain NCTC 13174 / 8081) protein is Enoyl-[acyl-carrier-protein] reductase [NADH].